The chain runs to 234 residues: Segregation and condensation protein A (234 aa).

The protein belongs to the ScpA family. In terms of assembly, component of a cohesin-like complex composed of ScpA, ScpB and the Smc homodimer, in which ScpA and ScpB bind to the head domain of Smc. The presence of the three proteins is required for the association of the complex with DNA.

It localises to the cytoplasm. Functionally, participates in chromosomal partition during cell division. May act via the formation of a condensin-like complex containing Smc and ScpB that pull DNA away from mid-cell into both cell halves. In Streptococcus pyogenes serotype M5 (strain Manfredo), this protein is Segregation and condensation protein A.